We begin with the raw amino-acid sequence, 246 residues long: 3-deoxy-manno-octulosonate cytidylyltransferase (246 aa).

Belongs to the KdsB family.

It is found in the cytoplasm. It catalyses the reaction 3-deoxy-alpha-D-manno-oct-2-ulosonate + CTP = CMP-3-deoxy-beta-D-manno-octulosonate + diphosphate. The protein operates within nucleotide-sugar biosynthesis; CMP-3-deoxy-D-manno-octulosonate biosynthesis; CMP-3-deoxy-D-manno-octulosonate from 3-deoxy-D-manno-octulosonate and CTP: step 1/1. Its pathway is bacterial outer membrane biogenesis; lipopolysaccharide biosynthesis. Its function is as follows. Activates KDO (a required 8-carbon sugar) for incorporation into bacterial lipopolysaccharide in Gram-negative bacteria. The polypeptide is 3-deoxy-manno-octulosonate cytidylyltransferase (Chloroherpeton thalassium (strain ATCC 35110 / GB-78)).